The sequence spans 342 residues: Protease HtpX homolog (342 aa).

The next 2 helical transmembrane spans lie at 6 to 26 (TAMLLAFMTALFMGVGFLIGG) and 28 to 48 (GGMMIALVIAGAMNLFSYWNS). His130 provides a ligand contact to Zn(2+). Glu131 is an active-site residue. Position 134 (His134) interacts with Zn(2+). 2 helical membrane-spanning segments follow: residues 145 to 165 (ITATLAGAISMLGNFAFFFGG) and 173 to 193 (GGGIIGPLVAMIVAPFAAMLV). Glu202 is a binding site for Zn(2+). Residues 290–342 (PQHSKPAASGPWGSSAERSTDDPWGVKGGASTRSVPKIGRRGKDNDAPKGPWN) are disordered.

The protein belongs to the peptidase M48B family. It depends on Zn(2+) as a cofactor.

The protein localises to the cell inner membrane. This chain is Protease HtpX homolog, found in Allorhizobium ampelinum (strain ATCC BAA-846 / DSM 112012 / S4) (Agrobacterium vitis (strain S4)).